Consider the following 365-residue polypeptide: MSHNSFGHLFRVTTWGESHGPALGCVVDGCPPGIRFTLAEIQAWLDKRKPGQSRFVTQRREDDLVKVLSGVMLDDDGETMISTGTPISMMIENTDQRSKDYSEIAKRYRPGHADYTYDVKYGIRDYRGGGRSSARETAARVAAGGIARKVVPGLVVRAALVQIGKHRINRANWDWSEVNNNPFFAPDPAIVPVWEEYLDGIRKAGSSIGAVVEVIAEGVPAGIGAPIYGKLDQDIASNLMSINAVKGVEIGDGFATAELSGEENADEMRIGSDGKPVFLANHAGGILGGIATGQPVVARFAIKPTSSILTERRSIDSDGNEVDVRTKGRHDPCVGIRAVPIGEAMLACTIADHYLRDRGQTGRLK.

NADP(+)-binding residues include R48 and R54. Residues 131-133 (RSS), 243-244 (NA), G288, 303-307 (KPTSS), and R329 contribute to the FMN site.

This sequence belongs to the chorismate synthase family. As to quaternary structure, homotetramer. It depends on FMNH2 as a cofactor.

It catalyses the reaction 5-O-(1-carboxyvinyl)-3-phosphoshikimate = chorismate + phosphate. The protein operates within metabolic intermediate biosynthesis; chorismate biosynthesis; chorismate from D-erythrose 4-phosphate and phosphoenolpyruvate: step 7/7. Its function is as follows. Catalyzes the anti-1,4-elimination of the C-3 phosphate and the C-6 proR hydrogen from 5-enolpyruvylshikimate-3-phosphate (EPSP) to yield chorismate, which is the branch point compound that serves as the starting substrate for the three terminal pathways of aromatic amino acid biosynthesis. This reaction introduces a second double bond into the aromatic ring system. The chain is Chorismate synthase from Sinorhizobium fredii (strain NBRC 101917 / NGR234).